The chain runs to 131 residues: Torsin-1A-interacting protein 2, isoform IFRG15 (131 aa).

In Mus musculus (Mouse), this protein is Torsin-1A-interacting protein 2, isoform IFRG15 (Tor1aip2).